The primary structure comprises 839 residues: Molybdenum cofactor sulfurase (839 aa).

Residue lysine 237 is modified to N6-(pyridoxal phosphate)lysine. Residue cysteine 401 is part of the active site. Over residues 651–662 (DQNYSQKQSPSM) the composition is skewed to polar residues. A disordered region spans residues 651–678 (DQNYSQKQSPSMPGSFPQAPSSPDPYPT). Positions 656-834 (QKQSPSMPGS…IMVGDAVTPS (179 aa)) constitute an MOSC domain.

The protein belongs to the class-V pyridoxal-phosphate-dependent aminotransferase family. MOCOS subfamily. It depends on pyridoxal 5'-phosphate as a cofactor.

It catalyses the reaction Mo-molybdopterin + L-cysteine + AH2 = thio-Mo-molybdopterin + L-alanine + A + H2O. It participates in cofactor biosynthesis; molybdopterin biosynthesis. In terms of biological role, sulfurates the molybdenum cofactor. Sulfation of molybdenum is essential for xanthine dehydrogenase (XDH) and aldehyde oxidase (ADO) enzymes in which molybdenum cofactor is liganded by 1 oxygen and 1 sulfur atom in active form. This chain is Molybdenum cofactor sulfurase, found in Emericella nidulans (strain FGSC A4 / ATCC 38163 / CBS 112.46 / NRRL 194 / M139) (Aspergillus nidulans).